A 37-amino-acid chain; its full sequence is Large ribosomal subunit protein bL36c (37 aa).

Belongs to the bacterial ribosomal protein bL36 family.

It is found in the plastid. The protein localises to the chloroplast. The chain is Large ribosomal subunit protein bL36c from Cryptomeria japonica (Japanese cedar).